We begin with the raw amino-acid sequence, 871 residues long: Zinc finger protein 473 (871 aa).

The 70-residue stretch at 6–75 (VTLKDVGMDF…AGGSPEATSP (70 aa)) folds into the KRAB domain. Disordered regions lie at residues 47 to 81 (PPRP…TETK) and 140 to 164 (NGES…TVST). The span at 71–81 (EATSPDVTETK) shows a compositional bias: polar residues. Residues 145-154 (TECKSHELKR) are compositionally biased toward basic and acidic residues. Residue Lys-148 forms a Glycyl lysine isopeptide (Lys-Gly) (interchain with G-Cter in SUMO2) linkage. The segment at 209–231 (YQCSECGKSFSGSYRLTQHWITH) adopts a C2H2-type 1 zinc-finger fold. Residues 265 to 286 (YVCNEYGTTFSQSTYLWHQKTH) form a C2H2-type 2; degenerate zinc finger. Positions 290-317 (KPCKSQDSDHPPSHDTQPGEHQKTHTDS) are enriched in basic and acidic residues. Residues 290-318 (KPCKSQDSDHPPSHDTQPGEHQKTHTDSK) are disordered. Residues 312-552 (KTHTDSKSYN…GFFVSGKILD (241 aa)) are interaction with SLBP/pre-mRNA complex. C2H2-type zinc fingers lie at residues 320 to 342 (YNCN…QKIH), 347 to 369 (YECS…QKTH), and 375 to 397 (SECQ…QALH). The C2H2-type 6; degenerate zinc-finger motif lies at 403–425 (YKCNERGKSFRHNSTLKIHQRVH). A Glycyl lysine isopeptide (Lys-Gly) (interchain with G-Cter in SUMO2) cross-link involves residue Lys-419. 4 consecutive C2H2-type zinc fingers follow at residues 431-453 (YKCS…RRIH), 459-481 (HKCQ…QAIH), 487-509 (YSCA…QKMH), and 515-537 (YECQ…ESVH). Glycyl lysine isopeptide (Lys-Gly) (interchain with G-Cter in SUMO2) cross-links involve residues Lys-549 and Lys-558. 2 C2H2-type zinc fingers span residues 562–584 (FKCN…ERIH) and 591–613 (FECD…QRIH). Residue Lys-635 forms a Glycyl lysine isopeptide (Lys-Gly) (interchain with G-Cter in SUMO2) linkage. C2H2-type zinc fingers lie at residues 646–668 (FKCN…QLIH), 674–696 (FKCS…ERTH), 702–724 (LVCN…QRIH), 730–752 (YVCD…QRIH), 758–780 (YVCQ…RRVH), 786–808 (YRCG…QRIH), 814–836 (YSCN…LRVH), and 842–864 (YQCQ…QRVH).

It belongs to the krueppel C2H2-type zinc-finger protein family. In terms of assembly, interacts with the SLBP/pre-mRNA complex but not with SLBP alone. Interacts with LSM11 in a U7 snRNP-dependent manner.

It localises to the nucleus. Involved in histone 3'-end pre-mRNA processing by associating with U7 snRNP and interacting with SLBP/pre-mRNA complex. Increases histone 3'-end pre-mRNA processing but has no effect on U7 snRNP levels, when overexpressed. Required for cell cycle progression from G1 to S phases. The protein is Zinc finger protein 473 (ZNF473) of Homo sapiens (Human).